A 249-amino-acid polypeptide reads, in one-letter code: GTP cyclohydrolase III (249 aa).

It belongs to the archaeal-type GTP cyclohydrolase family.

The enzyme catalyses GTP + 3 H2O = 2-amino-5-formylamino-6-(5-phospho-D-ribosylamino)pyrimidin-4(3H)-one + 2 phosphate + 2 H(+). Catalyzes the formation of 2-amino-5-formylamino-6-ribofuranosylamino-4(3H)-pyrimidinone ribonucleotide monophosphate and inorganic phosphate from GTP. Also has an independent pyrophosphate phosphohydrolase activity. The protein is GTP cyclohydrolase III of Methanothermobacter thermautotrophicus (strain ATCC 29096 / DSM 1053 / JCM 10044 / NBRC 100330 / Delta H) (Methanobacterium thermoautotrophicum).